The following is a 215-amino-acid chain: KID-containing protein 1 (215 aa).

Disordered stretches follow at residues 1 to 132 (MAGG…NKKR) and 150 to 183 (NPKS…GDVL). The segment covering 64–81 (DSEEEDEESEEDNDEEEL) has biased composition (acidic residues). The Nuclear localization signal signature appears at 129–137 (NKKRRLQIY). Acidic residues predominate over residues 162–175 (DNDDEEGDDGDLSD). The interval 177 to 204 (ERGGDVLARRPSFKNRALKSMSCFALSD) is kinase-inducible domain (KID). At serine 188 the chain carries Phosphoserine; by PKA.

As to quaternary structure, interacts with HDA19; Ser-188 is critical for this interaction. Strongly expressed in stems, flowers, roots and immature siliques, but not detected in leaf blades of seedlings.

Its subcellular location is the nucleus. Functionally, transcription activator which may regulates gene expression through interaction with the histone deacetylase HDA19. The polypeptide is KID-containing protein 1 (Brassica napus (Rape)).